The sequence spans 196 residues: MTTTHPALTAGRPAGYVPRLKQYYREHVVPALREQFGYRNVMQVPTLVKVVVNMGVGEAARDAKLIEGAVRDIAAITGQRPAIARARKSIAQFKLRAGMAIGAYATVRGDRMWEFLDRMLTLALPRIRDFRGLSPKQFDGHGNYTFGLTEQVMFHEVDQDKLDRFRGMDITVVTTARTDDEGRALLRHLGFPFREN.

It belongs to the universal ribosomal protein uL5 family. In terms of assembly, part of the 50S ribosomal subunit; part of the 5S rRNA/L5/L18/L25 subcomplex. Contacts the 5S rRNA and the P site tRNA. Forms a bridge to the 30S subunit in the 70S ribosome.

Functionally, this is one of the proteins that bind and probably mediate the attachment of the 5S RNA into the large ribosomal subunit, where it forms part of the central protuberance. In the 70S ribosome it contacts protein S13 of the 30S subunit (bridge B1b), connecting the 2 subunits; this bridge is implicated in subunit movement. Contacts the P site tRNA; the 5S rRNA and some of its associated proteins might help stabilize positioning of ribosome-bound tRNAs. The protein is Large ribosomal subunit protein uL5 of Acidothermus cellulolyticus (strain ATCC 43068 / DSM 8971 / 11B).